The chain runs to 705 residues: Elongation factor G (705 aa).

The 287-residue stretch at 8–294 (NLYRNFGIMA…AVIDYLPSPL (287 aa)) folds into the tr-type G domain. Residues 17 to 24 (AHIDAGKT), 92 to 96 (DTPGH), and 146 to 149 (NKMD) each bind GTP.

Belongs to the TRAFAC class translation factor GTPase superfamily. Classic translation factor GTPase family. EF-G/EF-2 subfamily.

Its subcellular location is the cytoplasm. Catalyzes the GTP-dependent ribosomal translocation step during translation elongation. During this step, the ribosome changes from the pre-translocational (PRE) to the post-translocational (POST) state as the newly formed A-site-bound peptidyl-tRNA and P-site-bound deacylated tRNA move to the P and E sites, respectively. Catalyzes the coordinated movement of the two tRNA molecules, the mRNA and conformational changes in the ribosome. The protein is Elongation factor G of Ruegeria pomeroyi (strain ATCC 700808 / DSM 15171 / DSS-3) (Silicibacter pomeroyi).